The primary structure comprises 311 residues: Pyrimidine-specific ribonucleoside hydrolase RihA (311 aa).

His240 is a catalytic residue.

It belongs to the IUNH family. RihA subfamily.

Its function is as follows. Hydrolyzes with equal efficiency cytidine or uridine to ribose and cytosine or uracil, respectively. The sequence is that of Pyrimidine-specific ribonucleoside hydrolase RihA from Escherichia coli O127:H6 (strain E2348/69 / EPEC).